The sequence spans 884 residues: DNA mismatch repair protein MutS (884 aa).

651–658 (GPNMSGKS) contacts ATP. Positions 843-884 (LRNQGKSQPAQKNCKKEPAPNRSPDPAVGDQLSLIPAPLFPD) are disordered.

It belongs to the DNA mismatch repair MutS family.

In terms of biological role, this protein is involved in the repair of mismatches in DNA. It is possible that it carries out the mismatch recognition step. This protein has a weak ATPase activity. The protein is DNA mismatch repair protein MutS of Synechococcus sp. (strain JA-2-3B'a(2-13)) (Cyanobacteria bacterium Yellowstone B-Prime).